The primary structure comprises 118 residues: Nucleoid-associated protein CTN_1899 (118 aa).

It belongs to the YbaB/EbfC family. In terms of assembly, homodimer.

The protein resides in the cytoplasm. The protein localises to the nucleoid. Binds to DNA and alters its conformation. May be involved in regulation of gene expression, nucleoid organization and DNA protection. This chain is Nucleoid-associated protein CTN_1899, found in Thermotoga neapolitana (strain ATCC 49049 / DSM 4359 / NBRC 107923 / NS-E).